We begin with the raw amino-acid sequence, 101 residues long: Small ribosomal subunit protein eS24 (101 aa).

The protein belongs to the eukaryotic ribosomal protein eS24 family.

This is Small ribosomal subunit protein eS24 from Methanosarcina acetivorans (strain ATCC 35395 / DSM 2834 / JCM 12185 / C2A).